Here is a 568-residue protein sequence, read N- to C-terminus: 2-succinyl-5-enolpyruvyl-6-hydroxy-3-cyclohexene-1-carboxylate synthase (568 aa).

Belongs to the TPP enzyme family. MenD subfamily. As to quaternary structure, homodimer. Mg(2+) is required as a cofactor. The cofactor is Mn(2+). Thiamine diphosphate serves as cofactor.

It carries out the reaction isochorismate + 2-oxoglutarate + H(+) = 5-enolpyruvoyl-6-hydroxy-2-succinyl-cyclohex-3-ene-1-carboxylate + CO2. The protein operates within quinol/quinone metabolism; 1,4-dihydroxy-2-naphthoate biosynthesis; 1,4-dihydroxy-2-naphthoate from chorismate: step 2/7. It functions in the pathway quinol/quinone metabolism; menaquinone biosynthesis. In terms of biological role, catalyzes the thiamine diphosphate-dependent decarboxylation of 2-oxoglutarate and the subsequent addition of the resulting succinic semialdehyde-thiamine pyrophosphate anion to isochorismate to yield 2-succinyl-5-enolpyruvyl-6-hydroxy-3-cyclohexene-1-carboxylate (SEPHCHC). The protein is 2-succinyl-5-enolpyruvyl-6-hydroxy-3-cyclohexene-1-carboxylate synthase of Haemophilus influenzae (strain PittGG).